Here is a 278-residue protein sequence, read N- to C-terminus: Elongation factor Ts 1, mitochondrial (278 aa).

It belongs to the EF-Ts family.

The protein localises to the mitochondrion. Functionally, associates with the EF-Tu.GDP complex and induces the exchange of GDP to GTP. It remains bound to the aminoacyl-tRNA.EF-Tu.GTP complex up to the GTP hydrolysis stage on the ribosome. The polypeptide is Elongation factor Ts 1, mitochondrial (Trypanosoma cruzi (strain CL Brener)).